Here is a 947-residue protein sequence, read N- to C-terminus: MQLPSSLVSVAESAVQNAQEAGYLQSWPNEVVEQFHYVSALSQFITETIHRDEALAQQLPTMLSELSRHQAYRTRLAALLAECPDEMSGHRVLRQFRNREMVYIAWKDFLHAWTLEESLRHLSQLAEAMIFETYQWQYKICCAEWGTPTNAEGEAQPMLIIGMGKLGGGELNFSSDIDLIFTYPENGETQGARRSIANAQFFTRLGQRIIKALDQQTFDGFCYRVDMRLRPFGESGPLVMSYAALEDYYQEQGRDWERYAMIKARVMGCEMYPQYQELRKMLRPFVFRRYIDFSAIQSLRRMKSMISSEVRRRGLTNNIKLGAGGIREIEFIAQVFQLIRGGREPSLRNRGLLETLSGIEELALLTPQEVSNLEAAYKYLRQLENLLQAMADKQTQTLPDCDIERLKLATAMQLESWDLLIEQTQQHMNKVHQVFETLIGDDEEDEGSTIARHFHELWDMANKQDVLELILEQDIQVEEPAIFSKAIINFKADLAKKTLGPRGREVLNRLMPKVFDAVFAHPDAQFGLPRVLHLLHNICTRTTYLELLDEHPAALVQLVRLCTASPMISEQLSRYPILLDELIDPQQLYNPIPLDSYRTELRDFLARIPEDDMEQQMEALRQFKQICILRIAAADIAGVLPVMKVSDHLTYLAEAIVEAVVSQAWLQVSEKYGEPTHVKDREGKGFAVIGYGKVGGWELGYNSDLDIVFMHDCPVNVYTDGKKEIDGRQFYLRLAQRIIHIFSTRTASGILYEVDTRLRPSGASGLLVSPTDAFDDYQHQDAWTWEHQALVRARMIYGDEPLAIAFHNTRHDVLCKPRDEQTLKKEVVEMREKMRDHLGGKKSGRFMIKQDVGGITDIEFLAQYLVLNYSHEKPKLTRWCDNVRIYETLIAQGVMEEDQAMQLIRAYTAMRNEIHHRNLLNLDADVVEDKFVAEREWVKQAWNQWFA.

The segment at 1–443 (MQLPSSLVSV…VFETLIGDDE (443 aa)) is adenylyl removase. An adenylyl transferase region spans residues 451 to 947 (ARHFHELWDM…VKQAWNQWFA (497 aa)).

This sequence belongs to the GlnE family. The cofactor is Mg(2+).

The catalysed reaction is [glutamine synthetase]-O(4)-(5'-adenylyl)-L-tyrosine + phosphate = [glutamine synthetase]-L-tyrosine + ADP. The enzyme catalyses [glutamine synthetase]-L-tyrosine + ATP = [glutamine synthetase]-O(4)-(5'-adenylyl)-L-tyrosine + diphosphate. Involved in the regulation of glutamine synthetase GlnA, a key enzyme in the process to assimilate ammonia. When cellular nitrogen levels are high, the C-terminal adenylyl transferase (AT) inactivates GlnA by covalent transfer of an adenylyl group from ATP to specific tyrosine residue of GlnA, thus reducing its activity. Conversely, when nitrogen levels are low, the N-terminal adenylyl removase (AR) activates GlnA by removing the adenylyl group by phosphorolysis, increasing its activity. The regulatory region of GlnE binds the signal transduction protein PII (GlnB) which indicates the nitrogen status of the cell. The polypeptide is Bifunctional glutamine synthetase adenylyltransferase/adenylyl-removing enzyme (Vibrio parahaemolyticus serotype O3:K6 (strain RIMD 2210633)).